Consider the following 364-residue polypeptide: Transcription factor IIIA (364 aa).

9 C2H2-type zinc fingers span residues 38–62 (FICS…LCKH), 68–92 (FVCD…VLIH), 98–123 (FVCA…ERKH), 130–154 (YVCS…QCQH), 160–184 (FRCT…GKVH), 187–211 (YLCQ…REAH), 215–237 (ITCN…MKTH), 244–269 (YRCP…LSFH), and 275–299 (FVCE…SVVH). The segment at 299–364 (HDPDKKRMKL…PPPAALLTVC (66 aa)) is disordered. Positions 338 to 352 (SLPNASAESSSSPEA) are enriched in low complexity.

It is found in the nucleus. Involved in ribosomal large subunit biogenesis. Binds the approximately 50 base pairs internal control region (ICR) of 5S ribosomal RNA genes. It is required for their RNA polymerase III-dependent transcription and may also maintain the transcription of other genes. Also binds the transcribed 5S RNA's. This Mus musculus (Mouse) protein is Transcription factor IIIA (Gtf3a).